The sequence spans 141 residues: Large ribosomal subunit protein uL11 (141 aa).

Belongs to the universal ribosomal protein uL11 family. As to quaternary structure, part of the ribosomal stalk of the 50S ribosomal subunit. Interacts with L10 and the large rRNA to form the base of the stalk. L10 forms an elongated spine to which L12 dimers bind in a sequential fashion forming a multimeric L10(L12)X complex. One or more lysine residues are methylated.

Its function is as follows. Forms part of the ribosomal stalk which helps the ribosome interact with GTP-bound translation factors. This is Large ribosomal subunit protein uL11 from Aliarcobacter butzleri (strain RM4018) (Arcobacter butzleri).